The sequence spans 439 residues: Protein translocase subunit SecY (439 aa).

A run of 10 helical transmembrane segments spans residues 28–48 (ILITVGLLILCRLGIFIPVPG), 73–93 (IFSGGGLSALGVFALGILPYI), 127–147 (LTRYVSLGWALLQSIVIAVWV), 156–176 (PLFTIQTALALVAGSMFVMWI), 179–199 (LITERGIGNGASLLIFLNIVA), 220–240 (VGGIVILLIVFLATIVGIVFV), 276–296 (GVMPIIFASAILVLPFSLANF), 318–338 (IYALFYLVLIVAFSYFYSSLI), 375–395 (LTILGAVFLGLVAIIPTAVEG), and 401–421 (TFQGFGATSLLILVGVAIDTA).

It belongs to the SecY/SEC61-alpha family. Component of the Sec protein translocase complex. Heterotrimer consisting of SecY, SecE and SecG subunits. The heterotrimers can form oligomers, although 1 heterotrimer is thought to be able to translocate proteins. Interacts with the ribosome. Interacts with SecDF, and other proteins may be involved. Interacts with SecA.

The protein localises to the cell inner membrane. It is found in the cellular thylakoid membrane. The central subunit of the protein translocation channel SecYEG. Consists of two halves formed by TMs 1-5 and 6-10. These two domains form a lateral gate at the front which open onto the bilayer between TMs 2 and 7, and are clamped together by SecE at the back. The channel is closed by both a pore ring composed of hydrophobic SecY resides and a short helix (helix 2A) on the extracellular side of the membrane which forms a plug. The plug probably moves laterally to allow the channel to open. The ring and the pore may move independently. This is Protein translocase subunit SecY from Synechococcus elongatus (strain ATCC 33912 / PCC 7942 / FACHB-805) (Anacystis nidulans R2).